A 297-amino-acid polypeptide reads, in one-letter code: 4-diphosphocytidyl-2-C-methyl-D-erythritol kinase (297 aa).

Lys10 is an active-site residue. Residue 95–105 (PVAGGMAGGSA) participates in ATP binding. Asp137 is a catalytic residue.

It belongs to the GHMP kinase family. IspE subfamily.

It carries out the reaction 4-CDP-2-C-methyl-D-erythritol + ATP = 4-CDP-2-C-methyl-D-erythritol 2-phosphate + ADP + H(+). Its pathway is isoprenoid biosynthesis; isopentenyl diphosphate biosynthesis via DXP pathway; isopentenyl diphosphate from 1-deoxy-D-xylulose 5-phosphate: step 3/6. Functionally, catalyzes the phosphorylation of the position 2 hydroxy group of 4-diphosphocytidyl-2C-methyl-D-erythritol. The sequence is that of 4-diphosphocytidyl-2-C-methyl-D-erythritol kinase from Streptomyces avermitilis (strain ATCC 31267 / DSM 46492 / JCM 5070 / NBRC 14893 / NCIMB 12804 / NRRL 8165 / MA-4680).